We begin with the raw amino-acid sequence, 292 residues long: Pyridoxal 5'-phosphate synthase subunit PdxS (292 aa).

Residue Asp-22 coordinates D-ribose 5-phosphate. The active-site Schiff-base intermediate with D-ribose 5-phosphate is Lys-79. Gly-151 serves as a coordination point for D-ribose 5-phosphate. Residue Arg-163 participates in D-glyceraldehyde 3-phosphate binding. D-ribose 5-phosphate contacts are provided by residues Gly-212 and 233-234; that span reads GS.

Belongs to the PdxS/SNZ family. In terms of assembly, in the presence of PdxT, forms a dodecamer of heterodimers.

It catalyses the reaction aldehydo-D-ribose 5-phosphate + D-glyceraldehyde 3-phosphate + L-glutamine = pyridoxal 5'-phosphate + L-glutamate + phosphate + 3 H2O + H(+). It functions in the pathway cofactor biosynthesis; pyridoxal 5'-phosphate biosynthesis. In terms of biological role, catalyzes the formation of pyridoxal 5'-phosphate from ribose 5-phosphate (RBP), glyceraldehyde 3-phosphate (G3P) and ammonia. The ammonia is provided by the PdxT subunit. Can also use ribulose 5-phosphate and dihydroxyacetone phosphate as substrates, resulting from enzyme-catalyzed isomerization of RBP and G3P, respectively. The sequence is that of Pyridoxal 5'-phosphate synthase subunit PdxS from Thermoanaerobacter pseudethanolicus (strain ATCC 33223 / 39E) (Clostridium thermohydrosulfuricum).